The primary structure comprises 333 residues: Type II secretion system protein K (333 aa).

Positions 1-7 (MRRGQNG) are cleaved as a propeptide — leader sequence. Residues 8–29 (VALITVLLVVAVVTIVCAGLII) form a helical membrane-spanning segment. Topologically, residues 30-333 (RQQLAIRSSA…GGDDWKKDER (304 aa)) are periplasmic. The tract at residues 313–333 (MGQGGLPIPSTGGDDWKKDER) is disordered.

The protein belongs to the GSP K family. As to quaternary structure, type II secretion is composed of four main components: the outer membrane complex, the inner membrane complex, the cytoplasmic secretion ATPase and the periplasm-spanning pseudopilus. Interacts with the tip of the type II pseudopilus subunits XcpV, XcpU and XcpW. Interacts with core component XcpT. Post-translationally, cleaved by prepilin peptidase.

Its subcellular location is the cell inner membrane. In terms of biological role, component of the type II secretion system required for the energy-dependent secretion of extracellular factors such as proteases and toxins from the periplasm. Plays a role in pseudopilus assembly and seems to control its length. Interacts with the pseudopilus tip complex that is critical for the recognition and binding of secretion substrates. Type II pseudopilus confers increased bacterial adhesive capabilities. The chain is Type II secretion system protein K (xcpX) from Pseudomonas aeruginosa (strain ATCC 15692 / DSM 22644 / CIP 104116 / JCM 14847 / LMG 12228 / 1C / PRS 101 / PAO1).